Consider the following 204-residue polypeptide: Large ribosomal subunit protein uL4 (204 aa).

Residues 49–76 are disordered; the sequence is KTKGISDVSGTTAKPYGQKRTGRARQGS.

It belongs to the universal ribosomal protein uL4 family. As to quaternary structure, part of the 50S ribosomal subunit.

Functionally, one of the primary rRNA binding proteins, this protein initially binds near the 5'-end of the 23S rRNA. It is important during the early stages of 50S assembly. It makes multiple contacts with different domains of the 23S rRNA in the assembled 50S subunit and ribosome. Its function is as follows. Forms part of the polypeptide exit tunnel. The protein is Large ribosomal subunit protein uL4 of Wolbachia sp. subsp. Drosophila simulans (strain wRi).